The primary structure comprises 81 residues: Small ribosomal subunit protein uS17 (81 aa).

The protein belongs to the universal ribosomal protein uS17 family. As to quaternary structure, part of the 30S ribosomal subunit.

In terms of biological role, one of the primary rRNA binding proteins, it binds specifically to the 5'-end of 16S ribosomal RNA. In Hyphomonas neptunium (strain ATCC 15444), this protein is Small ribosomal subunit protein uS17.